The following is a 433-amino-acid chain: Alpha-(1,3)-fucosyltransferase fut-1 (433 aa).

The Cytoplasmic segment spans residues 1-12 (MTARSIKLFFAR). A helical; Signal-anchor for type II membrane protein membrane pass occupies residues 13–32 (WKYLMFACCITYLLVIYAPI). Residues 33 to 433 (SKSEQKDWKE…GTLVDSIPLD (401 aa)) are Lumenal-facing. Residues asparagine 194 and asparagine 359 are each glycosylated (N-linked (GlcNAc...) asparagine).

Belongs to the glycosyltransferase 10 family. Mg(2+) serves as cofactor. It depends on Mn(2+) as a cofactor. Post-translationally, N-glycosylated. Glycosylation is important for enzymatic activity. As to expression, expressed in the pharyngeal-intestinal (PI) and anal valves. Expressed in ASG neurons and in one or two neurons in the retrovesicular ganglion and two neurons posterior to the PI valve and PHA and PHB neurons in the tail.

It is found in the golgi apparatus. It localises to the golgi stack membrane. The enzyme catalyses N(4)-{beta-D-GlcNAc-(1-&gt;2)-alpha-D-Man-(1-&gt;3)-[beta-D-GlcNAc-(1-&gt;2)-alpha-D-Man-(1-&gt;6)]-beta-D-Man-(1-&gt;4)-beta-D-GlcNAc-(1-&gt;4)-beta-D-GlcNAc}-L-asparaginyl-[protein] + GDP-beta-L-fucose = N(4)-{beta-D-GlcNAc-(1-&gt;2)-alpha-D-Man-(1-&gt;3)-[beta-D-GlcNAc-(1-&gt;2)-alpha-D-Man-(1-&gt;6)]-beta-D-Man-(1-&gt;4)-beta-D-GlcNAc-(1-&gt;4)-[alpha-L-Fuc(1-&gt;3)]-beta-D-GlcNAc}-L-asparaginyl-[protein] + GDP + H(+). It participates in protein modification; protein glycosylation. Inhibited by Cu(2+) or Zn(2+) and to a lesser extent Ni(2+) ions. Functionally, preferentially catalyzes the addition of fucose in alpha 1-3 linkage to the first GlcNAc residue (with or without alpha 1,6-linked fucose), next to the peptide chains in N-glycans. Unlike in mammals, does not require the prior action of N-acetylglucosaminyltransferase I to generate complex N-glycans. The chain is Alpha-(1,3)-fucosyltransferase fut-1 from Caenorhabditis elegans.